A 526-amino-acid polypeptide reads, in one-letter code: pH-sensitive chloride channel 2 (526 aa).

The first 18 residues, 1-18 (MDTLGIFVLISYLGLSSA), serve as a signal peptide directing secretion. The Extracellular segment spans residues 19-300 (AGVHLGDLQQ…VLLTREVGYY (282 aa)). N-linked (GlcNAc...) asparagine glycans are attached at residues Asn-33, Asn-42, Asn-52, Asn-192, Asn-231, Asn-264, Asn-271, and Asn-283. The chain crosses the membrane as a helical span at residues 301 to 321 (VIDYFLPSIMIVTISWVSFWL). Over 322–327 (QADQTP) the chain is Cytoplasmic. Residues 328–347 (ARTTLGCTTLLSFITLSLSQ) form a helical membrane-spanning segment. Residues 348 to 360 (ENNLMKVSYVTMS) are Extracellular-facing. A helical transmembrane segment spans residues 361–381 (EVWFLVCTIFIFGSLVEFAFV). Over 382–505 (NTIWRRNNDL…VSLWIDRKMR (124 aa)) the chain is Cytoplasmic. The segment at 463–488 (ISLDEQDETSTSESSDSSKEKPAQTF) is disordered. Residues 506-526 (FVFPLSFIVFNALFWTLVYCL) traverse the membrane as a helical segment.

Belongs to the ligand-gated ion channel (TC 1.A.9) family. In terms of tissue distribution, in third-instar larvae, expressed in the principal cells of the excretory Malpighian tubules (at protein level). Also detected in the enterocytes of the copper cell region and the iron cell region of the larval midgut (at protein level). In the copper cell region expression is confined to the interstitial cells and in the iron cell region it is expressed in the anterior portion (at protein level). Expressed in the Malpighian tubules and the middle midgut of third instar larvae and adults.

It is found in the apical cell membrane. The protein resides in the cell projection. The protein localises to the microvillus membrane. Its subcellular location is the late endosome membrane. It localises to the lysosome membrane. The catalysed reaction is chloride(in) = chloride(out). Functionally, ligand and pH-gated channel that mediates chloride transport primarily in the mid-gut and thereby functions in larval metabolism and fluid homeostasis. Channel opening is triggered by zinc binding or, to a lesser extent, an increase in extracellular pH. Zinc-dependent activity in the mid-gut is required for modulating Tor-dependent metabolic programs that promote larval feeding and systematic growth. It may therefore act as an intestinal zinc sensor that mediates larval growth and metabolism in response to micronutrient availability. Activates Tor signaling via its activity in maintaining lysosome homeostasis in interstitial cells and/or by its role in activating the release of insulin-like peptides in the brain after feeding, via an unknown mechanism. Functions in lysosome homeostasis by regulating chloride transport into enterocyte lysosomes to sustain V-ATPase function which maintains lysosomal acidification and consequently promotes Tor activation at the lysosome membrane. Also appears to play a role in regulating fluid secretion and osmotic homeostasis in Malpighian tubules in response to the pH of extracellular urine. This function is important for proper urine production during diuresis. The chain is pH-sensitive chloride channel 2 from Drosophila melanogaster (Fruit fly).